The sequence spans 185 residues: Prorelaxin (185 aa).

An N-terminal signal peptide occupies residues 1 to 24 (MPRLFLFHLLGVCLLLNQFSRAVA). 3 disulfides stabilise this stretch: C35-C172, C47-C185, and C171-C176. Residues 56–157 (SLNQEDAPLK…LRSLGLDTHS (102 aa)) constitute a propeptide, connecting peptide.

It belongs to the insulin family. As to quaternary structure, heterodimer of a B chain and an A chain linked by two disulfide bonds.

The protein localises to the secreted. Relaxin is an ovarian hormone that acts with estrogen to produce dilatation of the birth canal in many mammals. May be involved in remodeling of connective tissues during pregnancy, promoting growth of pubic ligaments and ripening of the cervix. This is Prorelaxin (RLN) from Macaca mulatta (Rhesus macaque).